A 134-amino-acid chain; its full sequence is uncharacterized protein (134 aa).

The helical transmembrane segment at 110-130 (SLGVLTDILFLVLYSLLIHLS) threads the bilayer.

The protein resides in the membrane. This is an uncharacterized protein from Saccharomyces cerevisiae (strain ATCC 204508 / S288c) (Baker's yeast).